A 92-amino-acid chain; its full sequence is MEQYDLYENESFANQLREKALKSKQFKLECFIKDFSELANKAAEQGKTHFNYYCIARDKLITEEIGDWLRKEGFSFKVNSDQRDGDWLEITF.

This is an uncharacterized protein from Enterobacteria phage T4 (Bacteriophage T4).